We begin with the raw amino-acid sequence, 269 residues long: Meiotic drive suppressor wtf5 (269 aa).

Residues 1–65 (MKNNYTSLKS…NTHRENHSYG (65 aa)) are disordered. Residues 19–30 (KTDHEIDLEKGP) are compositionally biased toward basic and acidic residues. Helical transmembrane passes span 73–95 (LLIILLISFTSIILFNAPEVCYL), 110–132 (WTLFGFWCLVCTLALIFLTYFYE), and 206–228 (WGLKCSLADHIIFVVLSILVFIA).

This sequence belongs to the WTF family. As to quaternary structure, homomer. Interacts with other proteins that exhibit high sequence similarity.

Its subcellular location is the spore membrane. The protein localises to the vacuole membrane. Acts as a suppressor component of the dual wtf meiotic drive system, and can suppress but not confer meiotic drive by compatible poisons. Wtf meiotic drive systems promote unequal transmission of alleles from the parental zygote to progeny spores by encoding a poison and an antidote from the same locus; the poison is trans-acting and forms toxic aggregates in all spores within an ascus, wherease the antidote is spore-specific and targets aggregates for degradation by the vacuole. Meiotic drive by wtf systems therefore lead to poisoning of all progeny that do not inherit the dual poison/antidote allele, or express a compatible antidote. This chain is Meiotic drive suppressor wtf5, found in Schizosaccharomyces pombe (strain 972 / ATCC 24843) (Fission yeast).